Consider the following 357-residue polypeptide: 3-dehydroquinate synthase (357 aa).

NAD(+)-binding positions include 104–108, 128–129, K141, and 168–171; these read GVVGD, TT, and FLET. Zn(2+) contacts are provided by E183, H243, and H260.

Belongs to the sugar phosphate cyclases superfamily. Dehydroquinate synthase family. NAD(+) serves as cofactor. Co(2+) is required as a cofactor. It depends on Zn(2+) as a cofactor.

The protein localises to the cytoplasm. The enzyme catalyses 7-phospho-2-dehydro-3-deoxy-D-arabino-heptonate = 3-dehydroquinate + phosphate. It participates in metabolic intermediate biosynthesis; chorismate biosynthesis; chorismate from D-erythrose 4-phosphate and phosphoenolpyruvate: step 2/7. Catalyzes the conversion of 3-deoxy-D-arabino-heptulosonate 7-phosphate (DAHP) to dehydroquinate (DHQ). The sequence is that of 3-dehydroquinate synthase from Streptococcus pyogenes serotype M3 (strain ATCC BAA-595 / MGAS315).